Reading from the N-terminus, the 192-residue chain is Intraflagellar transport protein 22 (192 aa).

GTP contacts are provided by residues 12–19 (GPQRTGKT) and 62–69 (WDVSGSVQ).

This sequence belongs to the small GTPase superfamily. Rab family. Component of the IFT complex B, composed of IFT88, IFT70, IFT52, IFT46, IFT27, IFT25 and IFT22.

The protein resides in the cell projection. The protein localises to the cilium. It is found in the flagellum. Its function is as follows. Component of the intraflagellar transport (IFT) complex B. Functions in regulating the cellular pool size of both complex A and complex B and thus plays a critical role in determining the cellular availability of IFT particles. The sequence is that of Intraflagellar transport protein 22 (FAP9) from Chlamydomonas reinhardtii (Chlamydomonas smithii).